We begin with the raw amino-acid sequence, 355 residues long: Cobalt-precorrin-5B C(1)-methyltransferase (355 aa).

Belongs to the CbiD family.

The enzyme catalyses Co-precorrin-5B + S-adenosyl-L-methionine = Co-precorrin-6A + S-adenosyl-L-homocysteine. Its pathway is cofactor biosynthesis; adenosylcobalamin biosynthesis; cob(II)yrinate a,c-diamide from sirohydrochlorin (anaerobic route): step 6/10. Its function is as follows. Catalyzes the methylation of C-1 in cobalt-precorrin-5B to form cobalt-precorrin-6A. The chain is Cobalt-precorrin-5B C(1)-methyltransferase from Sulfolobus acidocaldarius (strain ATCC 33909 / DSM 639 / JCM 8929 / NBRC 15157 / NCIMB 11770).